An 82-amino-acid chain; its full sequence is MVTIRLARGGAKKRPFYQVVVTDSRNARDGRFIERVGFFNPIATGSAEGLRLDLDRVSHWVSQGATVSDRVAALIKEAQKAA.

The protein belongs to the bacterial ribosomal protein bS16 family.

This chain is Small ribosomal subunit protein bS16, found in Edwardsiella ictaluri (strain 93-146).